Consider the following 160-residue polypeptide: Major pollen allergen Cor a 1 isoforms 5, 6, 11 and 16 (160 aa).

Belongs to the BetVI family.

The sequence is that of Major pollen allergen Cor a 1 isoforms 5, 6, 11 and 16 from Corylus avellana (European hazel).